The chain runs to 427 residues: Glutamate-1-semialdehyde 2,1-aminomutase (427 aa).

Residue Lys-265 is modified to N6-(pyridoxal phosphate)lysine.

This sequence belongs to the class-III pyridoxal-phosphate-dependent aminotransferase family. HemL subfamily. As to quaternary structure, homodimer. Pyridoxal 5'-phosphate is required as a cofactor.

Its subcellular location is the cytoplasm. It catalyses the reaction (S)-4-amino-5-oxopentanoate = 5-aminolevulinate. The protein operates within porphyrin-containing compound metabolism; protoporphyrin-IX biosynthesis; 5-aminolevulinate from L-glutamyl-tRNA(Glu): step 2/2. This chain is Glutamate-1-semialdehyde 2,1-aminomutase, found in Burkholderia lata (strain ATCC 17760 / DSM 23089 / LMG 22485 / NCIMB 9086 / R18194 / 383).